The following is a 625-amino-acid chain: MRTTNVWLVVIVWVTVGWSSCTGRFVVEKNNLRVTSPESIRGVYECALGNFGVPQYGGSMSGAVVYPKTNQKACKNFDDFEISFRSRVAGLPTFVLVDRGDCYFTLKAWNAQRAGAATILVADNRPEQLITMDAPEDETSDADYLQNITIPSALVSRSLGSAIKTAIAHGDPVHISLDWREALPHPNDRVAYELWTNSNDECGSKCDAQIRFLKRFKGAAQILEKGGYTRFTPHYITWYCPEAFLASRQCKTQCINGGRYCAPDPEQDFSRGYNGKDVIIQNLRQACFFRVTNESGKPWLWWDYVTDFAIRCPMKEEKYNKKCADQVIQSLGVDVKKIDKCIGDIDANAENPVLKEEQVAQVGKGSRGDVTILPTIVINNRQYRGKLQRSAVLKALCSGFRETTEPPICLTEDIETNECLQNNGGCWEDKTTNITACRDTFRGRVCQCPIVQGVKFLGDGYTHCEASGALRCGINNGGCWKQTQMGKTYSACRDDHSKGCKCPPGFIGDGLKECKDVNECEEKTACQCRDCKCKNTWGSYECSCSGSLLYIREHDICINRDARGDFSWGVIWIIIMGLGAAALGAYTVYKYRIRTYMDSEIRAIMAQYMPLDNNPNTQLSSQLEL.

An N-terminal signal peptide occupies residues 1–19 (MRTTNVWLVVIVWVTVGWS). The Lumenal portion of the chain corresponds to 20-567 (SCTGRFVVEK…INRDARGDFS (548 aa)). A PA domain is found at 55–167 (QYGGSMSGAV…SLGSAIKTAI (113 aa)). 3 N-linked (GlcNAc...) asparagine glycosylation sites follow: asparagine 147, asparagine 293, and asparagine 433. 2 EGF-like domains span residues 415-465 (ETNE…THCE) and 468-515 (GALR…KECK). Cystine bridges form between cysteine 419–cysteine 437, cysteine 426–cysteine 446, cysteine 448–cysteine 464, cysteine 472–cysteine 492, cysteine 479–cysteine 500, cysteine 502–cysteine 514, and cysteine 544–cysteine 557. Positions 516-558 (DVNECEEKTACQCRDCKCKNTWGSYECSCSGSLLYIREHDICI) constitute an EGF-like 3; calcium-binding domain. Residues 568-588 (WGVIWIIIMGLGAAALGAYTV) traverse the membrane as a helical segment. Over 589-625 (YKYRIRTYMDSEIRAIMAQYMPLDNNPNTQLSSQLEL) the chain is Cytoplasmic. The short motif at 608 to 611 (YMPL) is the Tyrosine-based internalization motif element.

The protein belongs to the VSR (BP-80) family. As to expression, expressed only in flowers.

The protein localises to the membrane. Its subcellular location is the golgi apparatus membrane. The protein resides in the cytoplasmic vesicle. It localises to the clathrin-coated vesicle membrane. It is found in the prevacuolar compartment membrane. In terms of biological role, vacuolar-sorting receptor (VSR) involved in clathrin-coated vesicles sorting from Golgi apparatus to vacuoles. The sequence is that of Vacuolar-sorting receptor 2 from Arabidopsis thaliana (Mouse-ear cress).